The following is a 158-amino-acid chain: Cyclic pyranopterin monophosphate synthase (158 aa).

Substrate is bound by residues 75-77 (LCH) and 111-112 (ME). D126 is a catalytic residue.

The protein belongs to the MoaC family. Homohexamer; trimer of dimers.

It catalyses the reaction (8S)-3',8-cyclo-7,8-dihydroguanosine 5'-triphosphate = cyclic pyranopterin phosphate + diphosphate. It participates in cofactor biosynthesis; molybdopterin biosynthesis. In terms of biological role, catalyzes the conversion of (8S)-3',8-cyclo-7,8-dihydroguanosine 5'-triphosphate to cyclic pyranopterin monophosphate (cPMP). In Caulobacter vibrioides (strain ATCC 19089 / CIP 103742 / CB 15) (Caulobacter crescentus), this protein is Cyclic pyranopterin monophosphate synthase.